A 386-amino-acid chain; its full sequence is Acetate kinase (386 aa).

Position 7 (asparagine 7) interacts with Mg(2+). Lysine 14 is an ATP binding site. Arginine 78 lines the substrate pocket. Aspartate 135 serves as the catalytic Proton donor/acceptor. Residues 195–199, 268–270, and 316–320 contribute to the ATP site; these read HLGNG, DMR, and GIGEN. Glutamate 370 is a Mg(2+) binding site.

Belongs to the acetokinase family. As to quaternary structure, homodimer. Requires Mg(2+) as cofactor. Mn(2+) serves as cofactor.

It is found in the cytoplasm. The catalysed reaction is acetate + ATP = acetyl phosphate + ADP. It functions in the pathway metabolic intermediate biosynthesis; acetyl-CoA biosynthesis; acetyl-CoA from acetate: step 1/2. Catalyzes the formation of acetyl phosphate from acetate and ATP. Can also catalyze the reverse reaction. The chain is Acetate kinase from Pseudarthrobacter chlorophenolicus (strain ATCC 700700 / DSM 12829 / CIP 107037 / JCM 12360 / KCTC 9906 / NCIMB 13794 / A6) (Arthrobacter chlorophenolicus).